The primary structure comprises 2471 residues: Neurogenic locus notch homolog protein 2 (2471 aa).

The first 25 residues, 1 to 25 (MPALRPALLWALLALWLCCAAPAHA), serve as a signal peptide directing secretion. 4 EGF-like domains span residues 26-63 (LQCR…EYCQ), 64-102 (HRDP…EDCQ), 105-143 (TSHP…KECQ), and 144-180 (WTDA…QKCE). Residues 26 to 1677 (LQCRDGYEPC…SESLTPERTQ (1652 aa)) lie on the Extracellular side of the membrane. Disulfide bonds link C28–C41, C35–C51, C53–C62, C68–C79, C73–C90, C92–C101, C109–C121, C115–C131, C133–C142, C148–C159, C153–C168, C170–C179, C186–C198, C192–C207, C209–C218, C225–C236, C230–C246, C248–C257, C264–C275, C269–C284, C286–C295, C302–C315, C309–C324, C326–C335, C342–C353, C347–C362, C364–C373, C379–C390, C384–C401, C403–C412, C419–C433, C427–C442, C444–C453, C460–C471, C465–C480, C482–C491, C498–C509, C503–C518, C520–C529, C536–C547, C541–C556, C558–C567, C574–C584, C579–C593, C595–C604, C611–C622, C616–C631, C633–C642, C649–C659, C654–C668, C670–C679, C686–C697, C691–C706, C708–C717, C724–C734, C729–C743, C745–C754, C761–C772, C766–C781, C783–C792, C799–C810, C804–C819, C821–C830, C837–C848, C842–C859, C861–C870, C877–C888, C882–C897, C899–C908, C915–C926, C920–C935, C937–C946, C953–C964, C958–C973, C975–C984, C991–C1002, C996–C1011, C1013–C1022, C1029–C1040, C1034–C1049, C1051–C1060, C1067–C1078, C1072–C1087, and C1089–C1098. N-linked (GlcNAc...) asparagine glycosylation is present at N46. N155 is a glycosylation site (N-linked (GlcNAc...) asparagine). In terms of domain architecture, EGF-like 5; calcium-binding spans 182–219 (DVNECDIPGHCQHGGTCLNLPGSYQCQCPQGFTGQYCD). Positions 221–258 (LYVPCAPSPCVNGGTCRQTGDFTFECNCLPGFEGSTCE) constitute an EGF-like 6 domain. The region spanning 260 to 296 (NIDDCPNHRCQNGGVCVDGVNTYNCRCPPQWTGQFCT) is the EGF-like 7; calcium-binding domain. Residues 298-336 (DVDECLLQPNACQNGGTCANRNGGYGCVCVNGWSGDDCS) enclose the EGF-like 8; calcium-binding domain. The region spanning 338-374 (NIDDCAFASCTPGSTCIDRVASFSCMCPEGKAGLLCH) is the EGF-like 9; calcium-binding domain. The region spanning 375–413 (LDDACISNPCHKGALCDTNPLNGQYICTCPQGYKGADCT) is the EGF-like 10 domain. The EGF-like 11; calcium-binding domain maps to 415–454 (DVDECAMANSNPCEHAGKCVNTDGAFHCECLKGYAGPRCE). The region spanning 456 to 492 (DINECHSDPCQNDATCLDKIGGFTCLCMPGFKGVHCE) is the EGF-like 12; calcium-binding domain. The 37-residue stretch at 494-530 (EINECQSNPCVNNGQCVDKVNRFQCLCPPGFTGPVCQ) folds into the EGF-like 13; calcium-binding domain. The 37-residue stretch at 532 to 568 (DIDDCSSTPCLNGAKCIDHPNGYECQCATGFTGVLCE) folds into the EGF-like 14; calcium-binding domain. An EGF-like 15; calcium-binding domain is found at 570 to 605 (NIDNCDPDPCHHGQCQDGIDSYTCICNPGYMGAICS). Residues 607–643 (QIDECYSSPCLNDGRCIDLVNGYQCNCQPGTSGVNCE) form the EGF-like 16; calcium-binding domain. An O-linked (Glc...) serine; alternate glycan is attached at S613. The O-linked (Xyl...) serine; alternate glycan is linked to S613. The EGF-like 17; calcium-binding domain occupies 645 to 680 (NFDDCASNPCIHGICMDGINRYSCVCSPGFTGQRCN). The 37-residue stretch at 682–718 (DIDECASNPCRKGATCINGVNGFRCICPEGPHHPSCY) folds into the EGF-like 18; calcium-binding domain. Positions 720-755 (QVNECLSNPCIHGNCTGGLSGYKCLCDAGWVGINCE) constitute an EGF-like 19 domain. N733 is a glycosylation site (N-linked (GlcNAc...) asparagine). An EGF-like 20; calcium-binding domain is found at 757-793 (DKNECLSNPCQNGGTCDNLVNGYRCTCKKGFKGYNCQ). Positions 795–831 (NIDECASNPCLNQGTCFDDISGYTCHCVLPYTGKNCQ) constitute an EGF-like 21; calcium-binding domain. The region spanning 833 to 871 (VLAPCSPNPCENAAVCKESPNFESYTCLCAPGWQGQRCT) is the EGF-like 22 domain. In terms of domain architecture, EGF-like 23; calcium-binding spans 873 to 909 (DIDECISKPCMNHGLCHNTQGSYMCECPPGFSGMDCE). One can recognise an EGF-like 24; calcium-binding domain in the interval 911 to 947 (DIDDCLANPCQNGGSCMDGVNTFSCLCLPGFTGDKCQ). An EGF-like 25; calcium-binding domain is found at 949–985 (DMNECLSEPCKNGGTCSDYVNSYTCKCQAGFDGVHCE). The EGF-like 26; calcium-binding domain maps to 987-1023 (NINECTESSCFNGGTCVDGINSFSCLCPVGFTGSFCL). The EGF-like 27; calcium-binding domain maps to 1025 to 1061 (EINECSSHPCLNEGTCVDGLGTYRCSCPLGYTGKNCQ). 2 consecutive EGF-like domains span residues 1063 to 1099 (LVNL…AYCD) and 1101 to 1147 (PNVS…SYCE). N-linked (GlcNAc...) asparagine glycosylation occurs at N1102. 24 cysteine pairs are disulfide-bonded: C1105–C1126, C1120–C1135, C1137–C1146, C1153–C1164, C1158–C1173, C1175–C1184, C1191–C1202, C1196–C1211, C1213–C1222, C1229–C1241, C1235–C1250, C1252–C1261, C1268–C1281, C1273–C1290, C1292–C1301, C1308–C1319, C1313–C1331, C1333–C1342, C1378–C1389, C1383–C1400, C1402–C1411, C1425–C1448, C1430–C1443, and C1439–C1455. One can recognise an EGF-like 30; calcium-binding domain in the interval 1149-1185 (QLDECASNPCQHGATCSDFIGGYRCECVPGYQGVNCE). An EGF-like 31; calcium-binding domain is found at 1187–1223 (EVDECQNQPCQNGGTCIDLVNHFKCSCPPGTRGLLCE). The EGF-like 32; calcium-binding domain occupies 1225–1262 (NIDDCARGPHCLNGGQCMDRIGGYSCRCLPGFAGERCE). EGF-like domains are found at residues 1264 to 1302 (DINE…RHCE), 1304 to 1343 (FVDV…ARCQ), and 1374 to 1412 (CESG…SRCE). LNR repeat units lie at residues 1425–1465 (CLSQ…PWAN), 1466–1502 (CSSP…NSKT), and 1503–1544 (CKYD…NLAE). The negative regulatory region (NRR) stretch occupies residues 1425–1677 (CLSQYCADKA…SESLTPERTQ (253 aa)). N1465 is a glycosylation site (N-linked (GlcNAc...) asparagine). 7 disulfide bridges follow: C1466/C1489, C1472/C1484, C1480/C1496, C1503/C1527, C1509/C1522, C1518/C1534, and C1632/C1639. The helical transmembrane segment at 1678–1698 (LLYLLAVAVVIILFIILLGVI) threads the bilayer. Residues 1699–2471 (MAKRKRKHGS…PPHNNMQVYA (773 aa)) lie on the Cytoplasmic side of the membrane. The residue at position 1716 (T1716) is a Phosphothreonine. A disordered region spans residues 1754–1788 (TSEHWVDDEGPQPKKVKAEDEALLSEEDDPIDRRP). The span at 1774–1783 (EALLSEEDDP) shows a compositional bias: acidic residues. The residue at position 1778 (S1778) is a Phosphoserine. A Phosphothreonine modification is found at T1802. Position 1804 is a phosphoserine (S1804). At T1808 the chain carries Phosphothreonine. 6 ANK repeats span residues 1827–1871 (DGCT…SLQA), 1876–1905 (TGEM…DANA), 1909–1939 (MGRC…DLDA), 1943–1972 (DGTT…DVNA), 1976–2005 (HGKS…NRDM), and 2009–2038 (KEET…NRDI). S1842 and S1845 each carry phosphoserine. Phosphoserine occurs at positions 2070, 2078, and 2081. 2 disordered regions span residues 2091-2168 (FLSL…TSSP) and 2380-2471 (VGKY…QVYA). Phosphothreonine is present on T2097. Over residues 2098–2107 (PMGKKSRRPS) the composition is skewed to basic residues. Polar residues-rich tracts occupy residues 2108 to 2117 (AKSTMPTSLP), 2137 to 2150 (EKVQ…TLSP), 2159 to 2168 (TYVSDTTSSP), and 2388 to 2406 (SQHS…SHSG). Residues 2417–2445 (PSPESPDQWSSSSPHSASDWSDVTTSPTP) show a composition bias toward low complexity.

It belongs to the NOTCH family. In terms of assembly, heterodimer of a C-terminal fragment N(TM) and an N-terminal fragment N(EC) which are probably linked by disulfide bonds. Interacts with MAML1, MAML2 and MAML3 which act as transcriptional coactivators for NOTCH2. Interacts with RELA/p65. Interacts with HIF1AN. Interacts (via ANK repeats) with TCIM, the interaction inhibits the nuclear translocation of NOTCH2 N2ICD. Interacts with CUL1, RBX1, SKP1 and FBXW7 that are SCF(FBXW7) E3 ubiquitin-protein ligase complex components. Interacts with MINAR1; this interaction increases MINAR1 stability and function. Interacts with NOTCH2NL (NOTCH2NLA, NOTCH2NLB and/or NOTCH2NLC); leading to enhance Notch signaling pathway in a non-cell-autonomous manner. Interacts with MDK; this interaction mediates a nuclear accumulation of NOTCH2 and therefore activation of NOTCH2 signaling leading to interaction between HES1 and STAT3. Interacts with MINAR2. Post-translationally, synthesized in the endoplasmic reticulum as an inactive form which is proteolytically cleaved by a furin-like convertase in the trans-Golgi network before it reaches the plasma membrane to yield an active, ligand-accessible form. Cleavage results in a C-terminal fragment N(TM) and a N-terminal fragment N(EC). Following ligand binding, it is cleaved by TNF-alpha converting enzyme (TACE) to yield a membrane-associated intermediate fragment called notch extracellular truncation (NEXT). This fragment is then cleaved by presenilin dependent gamma-secretase to release a notch-derived peptide containing the intracellular domain (NICD) from the membrane. In terms of processing, hydroxylated by HIF1AN. Can be either O-glucosylated or O-xylosylated at Ser-613 by POGLUT1. Post-translationally, phosphorylated by GSK3. GSK3-mediated phosphorylation is necessary for NOTCH2 recognition by FBXW7, ubiquitination and degradation via the ubiquitin proteasome pathway. In terms of tissue distribution, expressed in the brain, heart, kidney, lung, skeletal muscle and liver. Ubiquitously expressed in the embryo.

The protein localises to the cell membrane. It is found in the nucleus. The protein resides in the cytoplasm. Its function is as follows. Functions as a receptor for membrane-bound ligands Jagged-1 (JAG1), Jagged-2 (JAG2) and Delta-1 (DLL1) to regulate cell-fate determination. Upon ligand activation through the released notch intracellular domain (NICD) it forms a transcriptional activator complex with RBPJ/RBPSUH and activates genes of the enhancer of split locus. Affects the implementation of differentiation, proliferation and apoptotic programs. Involved in bone remodeling and homeostasis. In collaboration with RELA/p65 enhances NFATc1 promoter activity and positively regulates RANKL-induced osteoclast differentiation. Positively regulates self-renewal of liver cancer cells. The sequence is that of Neurogenic locus notch homolog protein 2 from Homo sapiens (Human).